Consider the following 845-residue polypeptide: Protein P (845 aa).

Positions 1-179 are terminal protein domain (TP); sequence MPLSYQHFRK…FCGSPYSWEQ (179 aa). A spacer region spans residues 180-348; it reads ELQHGRLVIK…YCLSHLVNLR (169 aa). The interval 226-252 is disordered; sequence GLQPRQGRLASSQPSRSGSIRAKAHPS. The segment covering 234-243 has biased composition (polar residues); it reads LASSQPSRSG. The tract at residues 349–692 is polymerase/reverse transcriptase domain (RT); the sequence is EDWGPCDEHG…YMNLYPVARQ (344 aa). Residues 359-602 enclose the Reverse transcriptase domain; it reads EHHIRIPRTP…YSLNFMGYII (244 aa). Residues aspartate 431, aspartate 553, and aspartate 554 each contribute to the Mg(2+) site. Residues 693-845 are rnaseH domain (RH); sequence RPGLCQVFAD…SPLHVAWRPP (153 aa).

The protein belongs to the hepadnaviridae P protein family.

It carries out the reaction DNA(n) + a 2'-deoxyribonucleoside 5'-triphosphate = DNA(n+1) + diphosphate. The enzyme catalyses Endonucleolytic cleavage to 5'-phosphomonoester.. With respect to regulation, activated by host HSP70 and HSP40 in vitro to be able to bind the epsilon loop of the pgRNA. Because deletion of the RNase H region renders the protein partly chaperone-independent, the chaperones may be needed indirectly to relieve occlusion of the RNA-binding site by this domain. Inhibited by several reverse-transcriptase inhibitors: Lamivudine, Adefovir and Entecavir. Functionally, multifunctional enzyme that converts the viral RNA genome into dsDNA in viral cytoplasmic capsids. This enzyme displays a DNA polymerase activity that can copy either DNA or RNA templates, and a ribonuclease H (RNase H) activity that cleaves the RNA strand of RNA-DNA heteroduplexes in a partially processive 3'- to 5'-endonucleasic mode. Neo-synthesized pregenomic RNA (pgRNA) are encapsidated together with the P protein, and reverse-transcribed inside the nucleocapsid. Initiation of reverse-transcription occurs first by binding the epsilon loop on the pgRNA genome, and is initiated by protein priming, thereby the 5'-end of (-)DNA is covalently linked to P protein. Partial (+)DNA is synthesized from the (-)DNA template and generates the relaxed circular DNA (RC-DNA) genome. After budding and infection, the RC-DNA migrates in the nucleus, and is converted into a plasmid-like covalently closed circular DNA (cccDNA). The activity of P protein does not seem to be necessary for cccDNA generation, and is presumably released from (+)DNA by host nuclear DNA repair machinery. The sequence is that of Protein P from Homo sapiens (Human).